Reading from the N-terminus, the 438-residue chain is MATKEFFPGIEKIKFEGKDSKNPMAFRYYDAEKVINGKKMKDWLRFAMAWWHTLCAEGGDQFGGGTKQFPWNGNADAIQAAKDKMDAGFEFMQKMGIEYYCFHDVDLVSEGASVEEYEANLKEIVAYAKQKQAETGIKLLWGTANVFGHARYMNGAATNPDFDVVARAAVQIKNAIDATIELGGENYVFWGGREGYMSLLNTDQKREKEHLAQMLTIARDYARARGFKGTFLIEPKPMEPTKHQYDVDTETVIGFLKAHGLDKDFKVNIEVNHATLAGHTFEHELAVAVDNGMLGSIDANRGDYQNGWDTDQFPIDNYELTQAMMQIIRNGGLGTGGTNFDAKTRRNSTDLEDIFIAHIAGMDAMARALESAAALLDESPYKKMLADRYASFDGGKGKEFEDGKLTLEDVVAYAKTKGEPKQTSGKQELYEAILNMYC.

Catalysis depends on residues H103 and D106. Mg(2+) is bound by residues E234, E270, H273, D298, D309, D311, and D341.

This sequence belongs to the xylose isomerase family. Homotetramer. Requires Mg(2+) as cofactor.

It localises to the cytoplasm. The catalysed reaction is alpha-D-xylose = alpha-D-xylulofuranose. In Bacteroides thetaiotaomicron (strain ATCC 29148 / DSM 2079 / JCM 5827 / CCUG 10774 / NCTC 10582 / VPI-5482 / E50), this protein is Xylose isomerase.